A 434-amino-acid polypeptide reads, in one-letter code: Anaerobic glycerol-3-phosphate dehydrogenase subunit B (434 aa).

This sequence belongs to the anaerobic G-3-P dehydrogenase subunit B family. As to quaternary structure, composed of a catalytic GlpA/B dimer and of membrane bound GlpC. It depends on FMN as a cofactor.

The enzyme catalyses a quinone + sn-glycerol 3-phosphate = dihydroxyacetone phosphate + a quinol. It functions in the pathway polyol metabolism; glycerol degradation via glycerol kinase pathway; glycerone phosphate from sn-glycerol 3-phosphate (anaerobic route): step 1/1. Functionally, conversion of glycerol 3-phosphate to dihydroxyacetone. Uses fumarate or nitrate as electron acceptor. The sequence is that of Anaerobic glycerol-3-phosphate dehydrogenase subunit B from Histophilus somni (strain 2336) (Haemophilus somnus).